We begin with the raw amino-acid sequence, 263 residues long: Chromosomal replication initiator protein DnaA (263 aa).

Glu1 is a region of interest (domain I, interacts with DnaA modulators). Position 1 (Glu1) is a region of interest, domain II. A domain III, AAA+ region region spans residues 1-179; that stretch reads ESGMGKTHLL…GSVSRLNFWS (179 aa). Positions 3, 5, 6, and 7 each coordinate ATP. The segment at 180 to 263 is domain IV, binds dsDNA; it reads QQNPEEKIIT…HTLAQIGEEF (84 aa).

The protein belongs to the DnaA family. Oligomerizes as a right-handed, spiral filament on DNA at oriC.

The protein resides in the cytoplasm. In terms of biological role, plays an essential role in the initiation and regulation of chromosomal replication. ATP-DnaA binds to the origin of replication (oriC) to initiate formation of the DNA replication initiation complex once per cell cycle. Binds the DnaA box (a 9 base pair repeat at the origin) and separates the double-stranded (ds)DNA. Forms a right-handed helical filament on oriC DNA; dsDNA binds to the exterior of the filament while single-stranded (ss)DNA is stabiized in the filament's interior. The ATP-DnaA-oriC complex binds and stabilizes one strand of the AT-rich DNA unwinding element (DUE), permitting loading of DNA polymerase. After initiation quickly degrades to an ADP-DnaA complex that is not apt for DNA replication. Binds acidic phospholipids. This chain is Chromosomal replication initiator protein DnaA, found in Mycoplasma mycoides.